A 243-amino-acid polypeptide reads, in one-letter code: MSMLCYTLIIAFLIGIWAAPKSEDNVPLGSPATSDLSDTSCAQTHEGLKTSRNTDQRHPAPKKAEDQELGSVANIIVDPKLFQKRRFQSPRVLFSIQPPPLSRDEQSVEFLDNEDTLNRNIRTKRETHPVYNRGEHSVCDSVSVWVTNKTKATDIKGNMVTVMVDINLNNEVYKQYFFETKCRNPNPVPSGCRGTDSRHWNSYCTTTQTFVRALTMEGNQASWRFIRIDTACVCVIIRKTDNF.

An N-terminal signal peptide occupies residues 1 to 18; that stretch reads MSMLCYTLIIAFLIGIWA. Residues 19 to 125 constitute a propeptide that is removed on maturation; that stretch reads APKSEDNVPL…TLNRNIRTKR (107 aa). Over residues 47–66 the composition is skewed to basic and acidic residues; that stretch reads GLKTSRNTDQRHPAPKKAED. Residues 47-67 form a disordered region; that stretch reads GLKTSRNTDQRHPAPKKAEDQ. 3 disulfides stabilise this stretch: cysteine 139/cysteine 204, cysteine 182/cysteine 232, and cysteine 192/cysteine 234. Asparagine 148 carries N-linked (GlcNAc...) asparagine glycosylation.

This sequence belongs to the NGF-beta family. As to quaternary structure, homodimer; non-covalently linked. In terms of tissue distribution, expressed by the venom gland.

It localises to the secreted. Nerve growth factor is important for the development and maintenance of the sympathetic and sensory nervous systems. It stimulates division and differentiation of sympathetic and embryonic sensory neurons as well as basal forebrain cholinergic neurons in the brain. Its relevance in the snake venom is not clear. However, it has been shown to inhibit metalloproteinase-dependent proteolysis of platelet glycoprotein Ib alpha, suggesting a metalloproteinase inhibition to prevent metalloprotease autodigestion and/or protection against prey proteases. Binds a lipid between the two protein chains in the homodimer. The lipid-bound form promotes histamine relase from mouse mast cells, contrary to the lipid-free form. This chain is Venom nerve growth factor 5, found in Tropidechis carinatus (Australian rough-scaled snake).